Consider the following 692-residue polypeptide: Putative clathrin assembly protein At1g14910 (692 aa).

In terms of domain architecture, ENTH spans 24–161; sequence RVNSDYAELD…ECFRVLKYDI (138 aa). The interval 325–383 is disordered; it reads YTPDDGLTSEDVGPSHEEHETSSPSDSAVVPSEETQLSSQSPPSVETPQNFIDTDDLLG. A compositionally biased stretch (polar residues) spans 357-376; it reads EETQLSSQSPPSVETPQNFI. The residue at position 363 (Ser-363) is a Phosphoserine. The stretch at 532-548 is repeat 1; that stretch reads FGEFPIVPVSEPQSTTS. Residues 532–666 form an 8 X 17 AA approximate tandem repeats region; that stretch reads FGEFPIVPVS…PVSEPQNTTG (135 aa). The 2; truncated repeat unit spans residues 549–564; the sequence is FGAFPVPVSEPSNTTG. 6 tandem repeats follow at residues 565–581, 582–598, 599–615, 616–632, 633–649, and 650–666.

In terms of tissue distribution, expressed in the whole plant.

The protein resides in the membrane. The protein localises to the clathrin-coated pit. It localises to the golgi apparatus. Its subcellular location is the cytoplasmic vesicle. It is found in the clathrin-coated vesicle. The protein is Putative clathrin assembly protein At1g14910 of Arabidopsis thaliana (Mouse-ear cress).